Here is a 400-residue protein sequence, read N- to C-terminus: Phosphoglycerate kinase (400 aa).

Residues Asp-22–Asn-24, Arg-38, His-61–Arg-64, Arg-119, and Arg-152 contribute to the substrate site. Residues Lys-205, Gly-296, Glu-327, and Gly-353–Thr-356 contribute to the ATP site.

Belongs to the phosphoglycerate kinase family. In terms of assembly, monomer.

It is found in the cytoplasm. The catalysed reaction is (2R)-3-phosphoglycerate + ATP = (2R)-3-phospho-glyceroyl phosphate + ADP. Its pathway is carbohydrate degradation; glycolysis; pyruvate from D-glyceraldehyde 3-phosphate: step 2/5. The sequence is that of Phosphoglycerate kinase from Campylobacter jejuni subsp. jejuni serotype O:2 (strain ATCC 700819 / NCTC 11168).